The chain runs to 175 residues: Granulocyte colony-stimulating factor (175 aa).

Cystine bridges form between cysteine 37–cysteine 43 and cysteine 65–cysteine 75. O-linked (GalNAc...) threonine glycosylation occurs at threonine 134.

The protein belongs to the IL-6 superfamily. Monomer. In terms of processing, O-glycosylated.

The protein localises to the secreted. Its function is as follows. Granulocyte/macrophage colony-stimulating factors are cytokines that act in hematopoiesis by controlling the production, differentiation, and function of 2 related white cell populations of the blood, the granulocytes and the monocytes-macrophages. This CSF induces granulocytes. The protein is Granulocyte colony-stimulating factor (CSF3) of Canis lupus familiaris (Dog).